An 812-amino-acid chain; its full sequence is Probable E3 ubiquitin-protein ligase hulA (812 aa).

The C2 domain maps to Met1 to Arg109. Disordered stretches follow at residues Asn131 to Arg235 and Arg250 to Asp350. Polar residues-rich tracts occupy residues Met148–Pro165, Ala174–Val199, Ser214–Asp223, and Arg250–Arg267. Residues Gly226–Asn259 enclose the WW 1 domain. Basic and acidic residues predominate over residues Leu276–Thr291. Residues Gly292 to Gln306 show a composition bias toward polar residues. The segment covering Thr307–Gly330 has biased composition (low complexity). WW domains are found at residues Gly330–Arg363 and Gly390–Leu423. One can recognise an HECT domain in the interval Ser479–Glu812. Catalysis depends on Cys780, which acts as the Glycyl thioester intermediate.

This sequence belongs to the RSP5/NEDD4 family. In terms of assembly, interacts with creD.

The protein resides in the cytoplasm. The catalysed reaction is S-ubiquitinyl-[E2 ubiquitin-conjugating enzyme]-L-cysteine + [acceptor protein]-L-lysine = [E2 ubiquitin-conjugating enzyme]-L-cysteine + N(6)-ubiquitinyl-[acceptor protein]-L-lysine.. It functions in the pathway protein modification; protein ubiquitination. Its function is as follows. E3 ubiquitin-protein ligase which accepts ubiquitin from an E2 ubiquitin-conjugating enzyme in the form of a thioester and then directly transfers the ubiquitin to targeted substrates. Probably involved in the regulatory network controlling carbon source utilization. In Aspergillus flavus (strain ATCC 200026 / FGSC A1120 / IAM 13836 / NRRL 3357 / JCM 12722 / SRRC 167), this protein is Probable E3 ubiquitin-protein ligase hulA (hulA).